A 546-amino-acid chain; its full sequence is Chaperonin GroEL 1 (546 aa).

Residues 30 to 33 (TLGP), K51, 87 to 91 (DGTTT), G415, 479 to 481 (NAA), and D495 contribute to the ATP site. The disordered stretch occupies residues 526–546 (KEDAPMPGGMPGGMGGMGMDM). Residues 534 to 546 (GMPGGMGGMGMDM) are compositionally biased toward gly residues.

The protein belongs to the chaperonin (HSP60) family. Forms a cylinder of 14 subunits composed of two heptameric rings stacked back-to-back. Interacts with the co-chaperonin GroES.

It is found in the cytoplasm. It catalyses the reaction ATP + H2O + a folded polypeptide = ADP + phosphate + an unfolded polypeptide.. Together with its co-chaperonin GroES, plays an essential role in assisting protein folding. The GroEL-GroES system forms a nano-cage that allows encapsulation of the non-native substrate proteins and provides a physical environment optimized to promote and accelerate protein folding. This Burkholderia cenocepacia (strain HI2424) protein is Chaperonin GroEL 1.